The following is a 55-amino-acid chain: MASSTDVRPKITLACEVCKHRNYITKKNRRNDPDRLEIKKFCPNCGKHQAHKESR.

Belongs to the bacterial ribosomal protein bL33 family.

The protein is Large ribosomal subunit protein bL33A of Mycolicibacterium vanbaalenii (strain DSM 7251 / JCM 13017 / BCRC 16820 / KCTC 9966 / NRRL B-24157 / PYR-1) (Mycobacterium vanbaalenii).